Consider the following 128-residue polypeptide: Large-conductance mechanosensitive channel (128 aa).

2 helical membrane passes run 10 to 30 (FAMR…SAFG) and 76 to 96 (GLFI…FMMI).

This sequence belongs to the MscL family. Homopentamer.

Its subcellular location is the cell inner membrane. In terms of biological role, channel that opens in response to stretch forces in the membrane lipid bilayer. May participate in the regulation of osmotic pressure changes within the cell. The sequence is that of Large-conductance mechanosensitive channel from Haemophilus influenzae (strain PittEE).